The chain runs to 199 residues: MIVLTEQERRLLSLVQPVAEGLGMEIVRLRVQGGRRPHLQIMAERAGGAPTGIEDCARLSRGMSPVLEAADPISEAYTLEVSTPGIDRPLTRPGDFARWIGHAVRIELARPIDGRRRFTGTITGEDNDGAHIELDDETKLVAAVHEMSRASLVLTDELIEAARVAGNLPPQPEDDEDMLADFEIDESEDEEDPETGDVQ.

A disordered region spans residues 165–199 (AGNLPPQPEDDEDMLADFEIDESEDEEDPETGDVQ). Positions 172–199 (PEDDEDMLADFEIDESEDEEDPETGDVQ) are enriched in acidic residues.

It belongs to the RimP family.

It localises to the cytoplasm. In terms of biological role, required for maturation of 30S ribosomal subunits. The sequence is that of Ribosome maturation factor RimP from Hyphomonas neptunium (strain ATCC 15444).